The following is a 57-amino-acid chain: IFFFVFACLLALSAVSAAPEPRWKVFKKIEKVGRNVRDGIIKAGPAIGVLGQAKALG.

The N-terminal stretch at 1–21 (IFFFVFACLLALSAVSAAPEP) is a signal peptide.

It belongs to the cecropin family.

The protein resides in the secreted. Functionally, cecropins have lytic and antibacterial activity against several Gram-positive and Gram-negative bacteria. This chain is Cecropin-A (CECA), found in Spodoptera litura (Asian cotton leafworm).